Reading from the N-terminus, the 398-residue chain is Phosphoglycerate kinase (398 aa).

Residues D21 to N23, R36, H59 to R62, R119, and R157 contribute to the substrate site. ATP is bound by residues K208, G296, E327, and G354–S357.

The protein belongs to the phosphoglycerate kinase family. As to quaternary structure, monomer.

The protein resides in the cytoplasm. The catalysed reaction is (2R)-3-phosphoglycerate + ATP = (2R)-3-phospho-glyceroyl phosphate + ADP. The protein operates within carbohydrate degradation; glycolysis; pyruvate from D-glyceraldehyde 3-phosphate: step 2/5. The polypeptide is Phosphoglycerate kinase (Streptococcus pneumoniae (strain 70585)).